The primary structure comprises 216 residues: Acyl-homoserine-lactone synthase (216 aa).

Belongs to the autoinducer synthase family.

It catalyses the reaction a fatty acyl-[ACP] + S-adenosyl-L-methionine = an N-acyl-L-homoserine lactone + S-methyl-5'-thioadenosine + holo-[ACP] + H(+). Required for the synthesis of OHHL (N-(3-oxohexanoyl)-L-homoserine lactone), an autoinducer molecule which binds to a yet uncharacterized transcriptional regulator. The chain is Acyl-homoserine-lactone synthase (eagI) from Enterobacter agglomerans (Erwinia herbicola).